A 385-amino-acid chain; its full sequence is A-type ATP synthase subunit C (385 aa).

It belongs to the V-ATPase V0D/AC39 subunit family. In terms of assembly, has multiple subunits with at least A(3), B(3), C, D, E, F, H, I and proteolipid K(x).

The protein localises to the cell membrane. In terms of biological role, component of the A-type ATP synthase that produces ATP from ADP in the presence of a proton gradient across the membrane. The polypeptide is A-type ATP synthase subunit C (Methanothermobacter thermautotrophicus (strain ATCC 29096 / DSM 1053 / JCM 10044 / NBRC 100330 / Delta H) (Methanobacterium thermoautotrophicum)).